A 282-amino-acid chain; its full sequence is Bifunctional protein FolD (282 aa).

NADP(+) is bound by residues 162 to 164 (GRS), Ser-187, and Val-228.

The protein belongs to the tetrahydrofolate dehydrogenase/cyclohydrolase family. As to quaternary structure, homodimer.

The catalysed reaction is (6R)-5,10-methylene-5,6,7,8-tetrahydrofolate + NADP(+) = (6R)-5,10-methenyltetrahydrofolate + NADPH. The enzyme catalyses (6R)-5,10-methenyltetrahydrofolate + H2O = (6R)-10-formyltetrahydrofolate + H(+). It participates in one-carbon metabolism; tetrahydrofolate interconversion. Functionally, catalyzes the oxidation of 5,10-methylenetetrahydrofolate to 5,10-methenyltetrahydrofolate and then the hydrolysis of 5,10-methenyltetrahydrofolate to 10-formyltetrahydrofolate. This chain is Bifunctional protein FolD, found in Thermus thermophilus (strain ATCC BAA-163 / DSM 7039 / HB27).